A 102-amino-acid polypeptide reads, in one-letter code: Large ribosomal subunit protein uL24 (102 aa).

The protein belongs to the universal ribosomal protein uL24 family. In terms of assembly, part of the 50S ribosomal subunit.

In terms of biological role, one of two assembly initiator proteins, it binds directly to the 5'-end of the 23S rRNA, where it nucleates assembly of the 50S subunit. One of the proteins that surrounds the polypeptide exit tunnel on the outside of the subunit. In Macrococcus caseolyticus (strain JCSC5402) (Macrococcoides caseolyticum), this protein is Large ribosomal subunit protein uL24.